A 289-amino-acid chain; its full sequence is 3-methyl-2-oxobutanoate hydroxymethyltransferase (289 aa).

The span at 1–10 (MSDSKSSAST) shows a compositional bias: low complexity. The tract at residues 1–33 (MSDSKSSASTSEDRLYGSAPSHDVPKRKTRTHH) is disordered. Residues Asp70 and Asp109 each coordinate Mg(2+). 3-methyl-2-oxobutanoate-binding positions include 70 to 71 (DS), Asp109, and Lys139. Glu141 contacts Mg(2+). Glu207 functions as the Proton acceptor in the catalytic mechanism.

The protein belongs to the PanB family. In terms of assembly, homodecamer; pentamer of dimers. Requires Mg(2+) as cofactor.

The protein resides in the cytoplasm. The enzyme catalyses 3-methyl-2-oxobutanoate + (6R)-5,10-methylene-5,6,7,8-tetrahydrofolate + H2O = 2-dehydropantoate + (6S)-5,6,7,8-tetrahydrofolate. It functions in the pathway cofactor biosynthesis; (R)-pantothenate biosynthesis; (R)-pantoate from 3-methyl-2-oxobutanoate: step 1/2. In terms of biological role, catalyzes the reversible reaction in which hydroxymethyl group from 5,10-methylenetetrahydrofolate is transferred onto alpha-ketoisovalerate to form ketopantoate. This Rhodococcus jostii (strain RHA1) protein is 3-methyl-2-oxobutanoate hydroxymethyltransferase.